Consider the following 231-residue polypeptide: Aldehyde decarbonylase (231 aa).

Glu-32, Glu-60, His-63, Glu-115, and His-147 together coordinate Fe cation.

Belongs to the aldehyde decarbonylase family. It depends on Binds 2 metal cations per subunit. The catalytic dinuclear metal-binding site could be either a di-iron or a manganese-iron cofactor. as a cofactor.

It catalyses the reaction a long-chain fatty aldehyde + 2 NADPH + O2 + H(+) = a long-chain alkane + formate + 2 NADP(+) + H2O. Functionally, catalyzes the decarbonylation of fatty aldehydes to alkanes. Requires the presence of ferredoxin, ferredoxin reductase and NADPH for in vitro decarbonylase activity. Involved in the biosynthesis of alkanes, mainly heptadecane and pentadecane. The chain is Aldehyde decarbonylase from Synechococcus elongatus (strain ATCC 33912 / PCC 7942 / FACHB-805) (Anacystis nidulans R2).